Here is a 457-residue protein sequence, read N- to C-terminus: Fibrinogen C domain-containing protein 1 (457 aa).

The segment at 1–20 (MGSDRWKNIGGAPQMEDSVQ) is disordered. Over 1–33 (MGSDRWKNIGGAPQMEDSVQDKSQRKGCGYILC) the chain is Cytoplasmic. The chain crosses the membrane as a helical; Signal-anchor for type II membrane protein span at residues 34-54 (TVLLSVAVLLAVTVTGAVLFM). The Extracellular portion of the chain corresponds to 55 to 457 (NHYHAPSTEP…MKIRPQREEN (403 aa)). Residues 211-235 (RPRVKADLQRAPSRSSRPRGCANGS) are disordered. The Fibrinogen C-terminal domain maps to 231-454 (CANGSKPRDC…FTEMKIRPQR (224 aa)). N233 carries an N-linked (GlcNAc...) asparagine glycan. C240 and C269 are oxidised to a cystine. The N-linked (GlcNAc...) asparagine glycan is linked to N336. The Ca(2+) site is built by D389 and D391. A disulfide bridge connects residues C397 and C410.

Homotetramer; disulfide-linked.

The protein resides in the membrane. Functionally, acetyl group-binding receptor which shows a calcium-dependent binding to acetylated structures such as chitin, some N-acetylated carbohydrates, and amino acids. In Xenopus tropicalis (Western clawed frog), this protein is Fibrinogen C domain-containing protein 1 (fibcd1).